Consider the following 503-residue polypeptide: Alpha-1B-glycoprotein (503 aa).

An N-terminal signal peptide occupies residues 1–21 (MSAWAALLLLWGLSLSPVTEQ). Ig-like V-type domains are found at residues 27–115 (PRPS…EVTG), 117–204 (EPLP…TVTI), 208–305 (DPPP…LVLS), 307–405 (GTLP…LRVD), and 406–501 (GPLP…LRVA). Cys-49 and Cys-96 are joined by a disulfide. 2 N-linked (GlcNAc...) asparagine glycosylation sites follow: Asn-137 and Asn-182. 4 disulfide bridges follow: Cys-142/Cys-185, Cys-235/Cys-282, Cys-333/Cys-382, and Cys-431/Cys-478. Asn-379 is a glycosylation site (N-linked (GlcNAc...) asparagine).

Interacts with CRISP3. Plasma.

It is found in the secreted. In Bos taurus (Bovine), this protein is Alpha-1B-glycoprotein.